A 205-amino-acid polypeptide reads, in one-letter code: Heat shock protein beta-1 (205 aa).

R12 is modified (omega-N-methylarginine). A Phosphoserine; by MAPKAPK2 and MAPKAPK3 modification is found at S15. S26 and S65 each carry phosphoserine. Residues 70 to 205 (APAYSRALSR…AAKSDETAAK (136 aa)) form an interaction with TGFB1I1 region. The region spanning 76 to 184 (ALSRQLSSGV…QSNEITIPVT (109 aa)) is the sHSP domain. S78 and S82 each carry phosphoserine; by MAPKAPK2, MAPKAPK3 and MAPKAPK5. Phosphoserine is present on residues S83, S86, and S98. K123 is subject to N6-acetyllysine. A Phosphothreonine modification is found at T174. S176 and S199 each carry phosphoserine.

Belongs to the small heat shock protein (HSP20) family. Homooligomer. Homodimer; becomes monomeric upon activation. Heterooligomer; with HSPB6. Associates with alpha- and beta-tubulin. Interacts with TGFB1I1. Interacts with CRYAB. Interacts with HSPB8. Interacts with HSPBAP1. Phosphorylated upon exposure to protein kinase C activators and heat shock. Phosphorylation by MAPKAPK2 and MAPKAPK3 in response to stress dissociates HSPB1 from large small heat-shock protein (sHsps) oligomers and impairs its chaperone activity and ability to protect against oxidative stress effectively. Phosphorylation by MAPKAPK5 in response to PKA stimulation induces F-actin rearrangement. Detected in all tissues tested: skeletal muscle, heart, aorta, large intestine, small intestine, stomach, esophagus, bladder, adrenal gland, thyroid, pancreas, testis, adipose tissue, kidney, liver, spleen, cerebral cortex, blood serum and cerebrospinal fluid. Highest levels are found in the heart and in tissues composed of striated and smooth muscle.

It is found in the cytoplasm. Its subcellular location is the nucleus. The protein resides in the cytoskeleton. It localises to the spindle. Its function is as follows. Small heat shock protein which functions as a molecular chaperone probably maintaining denatured proteins in a folding-competent state. Plays a role in stress resistance and actin organization. Through its molecular chaperone activity may regulate numerous biological processes including the phosphorylation and the axonal transport of neurofilament proteins. This is Heat shock protein beta-1 (HSPB1) from Homo sapiens (Human).